The sequence spans 123 residues: Holo-[acyl-carrier-protein] synthase (123 aa).

Mg(2+)-binding residues include Asp8 and Glu56.

It belongs to the P-Pant transferase superfamily. AcpS family. The cofactor is Mg(2+).

The protein localises to the cytoplasm. It catalyses the reaction apo-[ACP] + CoA = holo-[ACP] + adenosine 3',5'-bisphosphate + H(+). Functionally, transfers the 4'-phosphopantetheine moiety from coenzyme A to a Ser of acyl-carrier-protein. This Clostridium beijerinckii (strain ATCC 51743 / NCIMB 8052) (Clostridium acetobutylicum) protein is Holo-[acyl-carrier-protein] synthase.